The following is a 534-amino-acid chain: Glutamyl-tRNA(Gln) amidotransferase subunit B, mitochondrial (534 aa).

The N-terminal 28 residues, 1-28, are a transit peptide targeting the mitochondrion; that stretch reads MTVLCRLRHCHLSTPTLCRRFHDARVYK.

Belongs to the GatB/GatE family. GatB subfamily. As to quaternary structure, subunit of the heterotrimeric GatCAB amidotransferase (AdT) complex, composed of A, B and C subunits.

It is found in the mitochondrion. It catalyses the reaction L-glutamyl-tRNA(Gln) + L-glutamine + ATP + H2O = L-glutaminyl-tRNA(Gln) + L-glutamate + ADP + phosphate + H(+). Allows the formation of correctly charged Gln-tRNA(Gln) through the transamidation of misacylated Glu-tRNA(Gln) in the mitochondria. The reaction takes place in the presence of glutamine and ATP through an activated gamma-phospho-Glu-tRNA(Gln). The sequence is that of Glutamyl-tRNA(Gln) amidotransferase subunit B, mitochondrial from Laccaria bicolor (strain S238N-H82 / ATCC MYA-4686) (Bicoloured deceiver).